The sequence spans 449 residues: Deoxyguanosinetriphosphate triphosphohydrolase-like protein (449 aa).

The tract at residues 1-27 (MTSSVWQERRHGEDKQRRNDHRSPYQR) is disordered. A compositionally biased stretch (basic and acidic residues) spans 7–27 (QERRHGEDKQRRNDHRSPYQR). The HD domain occupies 59–255 (RLTHSLEVSQ…MELADDIAYA (197 aa)).

It belongs to the dGTPase family. Type 2 subfamily.

This is Deoxyguanosinetriphosphate triphosphohydrolase-like protein from Shewanella baltica (strain OS185).